We begin with the raw amino-acid sequence, 207 residues long: Carbonic anhydrase 2 (207 aa).

Cysteine 51, aspartate 53, histidine 104, and cysteine 107 together coordinate Zn(2+).

The protein belongs to the beta-class carbonic anhydrase family. Zn(2+) serves as cofactor.

The catalysed reaction is hydrogencarbonate + H(+) = CO2 + H2O. Its function is as follows. Catalyzes the reversible hydration of carbon dioxide to form bicarbonate. The chain is Carbonic anhydrase 2 (mtcA2) from Mycobacterium tuberculosis (strain CDC 1551 / Oshkosh).